We begin with the raw amino-acid sequence, 315 residues long: Acetyl-coenzyme A carboxylase carboxyl transferase subunit alpha (315 aa).

Positions 39–293 constitute a CoA carboxyltransferase C-terminal domain; sequence RLQDKSSTLT…RGELASQLAM (255 aa).

Belongs to the AccA family. Acetyl-CoA carboxylase is a heterohexamer composed of biotin carboxyl carrier protein (AccB), biotin carboxylase (AccC) and two subunits each of ACCase subunit alpha (AccA) and ACCase subunit beta (AccD).

Its subcellular location is the cytoplasm. The catalysed reaction is N(6)-carboxybiotinyl-L-lysyl-[protein] + acetyl-CoA = N(6)-biotinyl-L-lysyl-[protein] + malonyl-CoA. It functions in the pathway lipid metabolism; malonyl-CoA biosynthesis; malonyl-CoA from acetyl-CoA: step 1/1. In terms of biological role, component of the acetyl coenzyme A carboxylase (ACC) complex. First, biotin carboxylase catalyzes the carboxylation of biotin on its carrier protein (BCCP) and then the CO(2) group is transferred by the carboxyltransferase to acetyl-CoA to form malonyl-CoA. The polypeptide is Acetyl-coenzyme A carboxylase carboxyl transferase subunit alpha (Pseudomonas fluorescens (strain SBW25)).